We begin with the raw amino-acid sequence, 853 residues long: Cytochrome P450 monooxygenase mpaDE' (853 aa).

Residues 1 to 6 lie on the Lumenal side of the membrane; the sequence is MESLSL. A helical membrane pass occupies residues 7 to 29; it reads TWITAIAVVLYLVQRYVRSYWRL. Residues 30-853 lie on the Cytoplasmic side of the membrane; the sequence is KDIPGPVLAK…DIENAIEGQK (824 aa). Cys449 provides a ligand contact to heme.

The protein belongs to the cytochrome P450 family. The cofactor is heme.

The protein localises to the endoplasmic reticulum membrane. The catalysed reaction is 5-methylorsellinate + reduced [NADPH--hemoprotein reductase] + O2 = 4,6-dihydroxy-2-(hydroxymethyl)-3-methylbenzoate + oxidized [NADPH--hemoprotein reductase] + H2O + H(+). It catalyses the reaction 4,6-dihydroxy-2-(hydroxymethyl)-3-methylbenzoate + H(+) = 5,7-dihydroxy-4-methylphthalide + H2O. It participates in secondary metabolite biosynthesis; terpenoid biosynthesis. In terms of biological role, cytochrome P450 monooxygenase; part of the gene cluster that mediates the biosynthesis of mycophenolic acid (MPA), the first isolated antibiotic natural product in the world obtained from a culture of Penicillium brevicompactum in 1893. MpaDE' is an endoplasmic reticulum-bound enzyme that catalyzes the conversion of 5-methylorsellinic acid (5MOA) into the phthalide compound 5,7-dihydroxy-4,6-dimethylphthalide (DHMP). MpaDE' first catalyzes hydroxylation of 5-MOA to 4,6-dihydroxy-2-(hydroxymethyl)-3-methylbenzoic acid (DHMB), and then acts as a lactone synthase that catalyzes the ring closure to convert DHMB into DHMP. The first step of the pathway is the synthesis of 5-methylorsellinic acid (5MOA) by the cytosolic polyketide synthase mpaC. 5MOA is then converted to the phthalide compound 5,7-dihydroxy-4,6-dimethylphthalide (DHMP) by the endoplasmic reticulum-bound cytochrome P450 monooxygenase mpaDE. MpaDE first catalyzes hydroxylation of 5-MOA to 4,6-dihydroxy-2-(hydroxymethyl)-3-methylbenzoic acid (DHMB). MpaDE then acts as a lactone synthase that catalyzes the ring closure to convert DHMB into DHMP. The next step is the prenylation of DHMP by the Golgi apparatus-associated prenyltransferase mpaA to yield farnesyl-DHMP (FDHMP). The ER-bound oxygenase mpaB then mediates the oxidative cleavage the C19-C20 double bond in FDHMP to yield FDHMP-3C via a mycophenolic aldehyde intermediate. The O-methyltransferase mpaG catalyzes the methylation of FDHMP-3C to yield MFDHMP-3C. After the cytosolic methylation of FDHMP-3C, MFDHMP-3C enters into peroxisomes probably via free diffusion due to its low molecular weight. Upon a peroxisomal CoA ligation reaction, catalyzed by a beta-oxidation component enzyme acyl-CoA ligase ACL891, MFDHMP-3C-CoA would then be restricted to peroxisomes for the following beta-oxidation pathway steps. The peroxisomal beta-oxidation machinery than converts MFDHMP-3C-CoA into MPA_CoA, via a beta-oxidation chain-shortening process. Finally mpaH acts as a peroxisomal acyl-CoA hydrolase with high substrate specificity toward MPA-CoA to release the final product MPA. The sequence is that of Cytochrome P450 monooxygenase mpaDE' from Penicillium brevicompactum.